The sequence spans 216 residues: NKG2-D type II integral membrane protein (216 aa).

Topologically, residues 1–51 are cytoplasmic; sequence MGWIRGRRSRHSWEMSEFHNYNLDLKKSDFSTRWQKQRCPVVKSKCRENAS. The chain crosses the membrane as a helical; Signal-anchor for type II membrane protein span at residues 52-72; sequence PFFFCCFIAVAMGIRFIIMVT. Residues 73-216 are Extracellular-facing; that stretch reads IWSAVFLNSL…NTYICMQRTV (144 aa). Intrachain disulfides connect Cys96–Cys105, Cys99–Cys110, Cys127–Cys211, and Cys189–Cys203. The 116-residue stretch at 98-213 folds into the C-type lectin domain; that stretch reads PCPKNWICYK…STPNTYICMQ (116 aa). N-linked (GlcNAc...) asparagine glycans are attached at residues Asn131, Asn163, and Asn202.

As to quaternary structure, homodimer; disulfide-linked. Heterohexamer composed of two subunits of KLRK1 and four subunits of HCST/DAP10. Interacts (via transmembrane domain) with HCST/DAP10 (via transmembrane domain); the interaction is required for KLRK1 NK cell surface and induces NK cell-mediated cytotoxicity. Does not interact with TYROBP. Interacts with CEACAM1; recruits PTPN6 that dephosphorylates VAV1. As to expression, expressed in natural killer (NK) cells, CD8(+) alpha-beta and gamma-delta T-cells. Expressed on essentially all CD56+CD3- NK cells from freshly isolated PBMC. Expressed in interferon-producing killer dendritic cells (IKDCs).

It localises to the cell membrane. Its function is as follows. Functions as an activating and costimulatory receptor involved in immunosurveillance upon binding to various cellular stress-inducible ligands displayed at the surface of autologous tumor cells and virus-infected cells. Provides both stimulatory and costimulatory innate immune responses on activated killer (NK) cells, leading to cytotoxic activity. Acts as a costimulatory receptor for T-cell receptor (TCR) in CD8(+) T-cell-mediated adaptive immune responses by amplifying T-cell activation. Stimulates perforin-mediated elimination of ligand-expressing tumor cells. Signaling involves calcium influx, culminating in the expression of TNF-alpha. Participates in NK cell-mediated bone marrow graft rejection. May play a regulatory role in differentiation and survival of NK cells. Binds to ligands belonging to various subfamilies of MHC class I-related glycoproteins including MICA, MICB, RAET1E, RAET1G, RAET1L/ULBP6, ULBP1, ULBP2, ULBP3 (ULBP2&gt;ULBP1&gt;ULBP3) and ULBP4. This chain is NKG2-D type II integral membrane protein (KLRK1), found in Homo sapiens (Human).